The sequence spans 203 residues: NAD(P)H dehydrogenase (quinone) (203 aa).

One can recognise a Flavodoxin-like domain in the interval 3–194 (IMVVYYSAYG…AGANFQGRHV (192 aa)). FMN contacts are provided by residues 9–14 (SAYGHV) and 82–84 (ARF). Tyrosine 11 provides a ligand contact to NAD(+). Substrate is bound at residue tryptophan 102. Residues 117-123 (STGTQHG) and histidine 138 each bind FMN.

Belongs to the WrbA family. FMN is required as a cofactor.

The catalysed reaction is a quinone + NADH + H(+) = a quinol + NAD(+). The enzyme catalyses a quinone + NADPH + H(+) = a quinol + NADP(+). In Syntrophus aciditrophicus (strain SB), this protein is NAD(P)H dehydrogenase (quinone).